The sequence spans 224 residues: ATP-dependent dethiobiotin synthetase BioD (224 aa).

14–19 (GIGKTV) contacts ATP. Thr18 contacts Mg(2+). Lys39 is a catalytic residue. Ser43 is a binding site for substrate. ATP is bound by residues Asp56, 117–120 (EGVG), and 177–178 (NE). Mg(2+) contacts are provided by Asp56 and Glu117.

This sequence belongs to the dethiobiotin synthetase family. Homodimer. It depends on Mg(2+) as a cofactor.

The protein localises to the cytoplasm. It carries out the reaction (7R,8S)-7,8-diammoniononanoate + CO2 + ATP = (4R,5S)-dethiobiotin + ADP + phosphate + 3 H(+). The protein operates within cofactor biosynthesis; biotin biosynthesis; biotin from 7,8-diaminononanoate: step 1/2. In terms of biological role, catalyzes a mechanistically unusual reaction, the ATP-dependent insertion of CO2 between the N7 and N8 nitrogen atoms of 7,8-diaminopelargonic acid (DAPA, also called 7,8-diammoniononanoate) to form a ureido ring. The chain is ATP-dependent dethiobiotin synthetase BioD from Xanthomonas campestris pv. campestris (strain 8004).